A 428-amino-acid polypeptide reads, in one-letter code: D-amino acid dehydrogenase (428 aa).

An FAD-binding site is contributed by 3-17 (VVILGSGVVGVASAY).

This sequence belongs to the DadA oxidoreductase family. FAD serves as cofactor.

It catalyses the reaction a D-alpha-amino acid + A + H2O = a 2-oxocarboxylate + AH2 + NH4(+). The protein operates within amino-acid degradation; D-alanine degradation; NH(3) and pyruvate from D-alanine: step 1/1. Oxidative deamination of D-amino acids. The protein is D-amino acid dehydrogenase of Burkholderia mallei (strain NCTC 10247).